The sequence spans 913 residues: MKKRIDYLSNKQNKYSIRRFTVGTTSVIVGATILFGIGNHQAQASEQSNDTTQSSKNNASADSEKNNMIETPQLNTTANDTSDISANTNSANVDSTTKPMSTQTSNTTTTEPASTNETPQPTAIKNQATAAKMQDQTVPQEANSQVDNKTTNDANSIATNSELKNSQTLDLPQSSPQTISNAQGTSKPSVRTRAVRSLAVAEPVVNAADAKGTNVNDKVTASNFKLEKTTFDPNQSGNTFMAANFTVTDKVKSGDYFTAKLPDSLTGNGDVDYSNSNNTMPIADIKSTNGDVVAKATYDILTKTYTFVFTDYVNNKENINGQFSLPLFTDRAKAPKSGTYDANINIADEMFNNKITYNYSSPIAGIDKPNGANISSQIIGVDTASGQNTYKQTVFVNPKQRVLGNTWVYIKGYQDKIEESSGKVSATDTKLRIFEVNDTSKLSDSYYADPNDSNLKEVTDQFKNRIYYEHPNVASIKFGDITKTYVVLVEGHYDNTGKNLKTQVIQENVDPVTNRDYSIFGWNNENVVRYGGGSADGDSAVNPKDPTPGPPVDPEPSPDPEPEPTPDPEPSPDPEPEPSPDPDPDSDSDSDSGSDSDSGSDSDSESDSDSDSDSDSDSDSDSESDSDSESDSDSDSDSDSDSDSDSDSDSDSDSDSDSDSDSDSESDSDSESDSESDSDSDSDSDSDSDSDSDSDSDSDSDSDSDSDSDSDSDSDSDSDSDSDSDSDSDSDSDSDSDSDSDSDSDSDSDSDSDSDSDSDSDSDSDSDSDSDSDSDSDSDSDSDSDSDSDSDSDSDSDSDSDSDSDSDSDSDSDSDSDSDSDSDSDSDSDSDSDSDSDSDSRVTPPNNEQKAPSNPKGEVNHSNKVSKQHKTDALPETGDKSENTNATLFGAMMALLGSLLLFRKRKQDHKEKA.

The N-terminal stretch at 1–44 (MKKRIDYLSNKQNKYSIRRFTVGTTSVIVGATILFGIGNHQAQA) is a signal peptide. The YSIRK-G/S signaling motif signature appears at 15–26 (YSIRRFTVGTTS). 2 stretches are compositionally biased toward polar residues: residues 44 to 61 (ASEQ…NASA) and 68 to 95 (MIET…NVDS). The tract at residues 44–192 (ASEQSNDTTQ…QGTSKPSVRT (149 aa)) is disordered. The segment at 45–542 (SEQSNDTTQS…GSADGDSAVN (498 aa)) is ligand binding A region. The span at 96–119 (TTKPMSTQTSNTTTTEPASTNETP) shows a compositional bias: low complexity. The segment covering 120–189 (QPTAIKNQAT…SNAQGTSKPS (70 aa)) has biased composition (polar residues). Positions 272–276 (DYSNS) match the MIDAS-like motif motif. Residues 530–885 (YGGGSADGDS…ETGDKSENTN (356 aa)) are disordered. The segment covering 545-555 (DPTPGPPVDPE) has biased composition (pro residues). A compositionally biased stretch (acidic residues) spans 556 to 837 (PSPDPEPEPT…SDSDSDSDSD (282 aa)). Residues 841 to 852 (RVTPPNNEQKAP) show a composition bias toward polar residues. Basic and acidic residues predominate over residues 869 to 882 (HKTDALPETGDKSE). An LPXTG sorting signal motif is present at residues 874–878 (LPETG). At threonine 877 the chain carries Pentaglycyl murein peptidoglycan amidated threonine. Residues 878 to 913 (GDKSENTNATLFGAMMALLGSLLLFRKRKQDHKEKA) constitute a propeptide, removed by sortase.

Belongs to the serine-aspartate repeat-containing protein (SDr) family. Proteolytically cleaved by aureolysin (aur). This cleavage leads to the inactivation of ClfB.

It localises to the secreted. The protein localises to the cell wall. Functionally, cell surface-associated protein implicated in virulence by promoting bacterial attachment to both alpha- and beta-chains of human fibrinogen and inducing the formation of bacterial clumps. The sequence is that of Clumping factor B (clfB) from Staphylococcus aureus (strain COL).